Here is a 151-residue protein sequence, read N- to C-terminus: Cytochrome c-type biogenesis protein CcmE (151 aa).

The Cytoplasmic portion of the chain corresponds to 1–8 (MNPQRKKR). Residues 9–29 (LFLILGLLAGVAVAVGFALSA) form a helical; Signal-anchor for type II membrane protein membrane-spanning segment. At 30–151 (LQQNINLFYT…QAASGAEAKP (122 aa)) the chain is on the periplasmic side. 2 residues coordinate heme: His124 and Tyr128.

Belongs to the CcmE/CycJ family.

It is found in the cell inner membrane. In terms of biological role, heme chaperone required for the biogenesis of c-type cytochromes. Transiently binds heme delivered by CcmC and transfers the heme to apo-cytochromes in a process facilitated by CcmF and CcmH. This Pseudomonas putida (strain W619) protein is Cytochrome c-type biogenesis protein CcmE.